The following is a 265-amino-acid chain: uncharacterized protein (265 aa).

Residues 1–21 (MAFNNSTIIIIIVIAFAFFLI) traverse the membrane as a helical segment. Residues Asn74 and Asn142 are each glycosylated (N-linked (GlcNAc...) asparagine; by host).

It localises to the host membrane. The protein localises to the virion. This is an uncharacterized protein from Acanthamoeba polyphaga mimivirus (APMV).